The following is a 314-amino-acid chain: MMASERNQSSTPTFILLGFSEYPEIQVPLFLVFLFVYTVTVVGNLGMIIIIRLNSKLHTIMCFFLSHLSLTDFCFSTVVTPKLLENLVVEYRTISFSGCIMQFCFACIFGVTETFMLAAMAYDRFVAVCKPLLYTTIMSQKLCALLVAGSYTWGIVCSLILTYFLLDLSFCESTFINNFICDHSVIVSASYSDPYISQRLCFIIAIFNEVSSLIIILTSYMLIFTTIMKMRSASGRQKTFSTCASHLTAITIFHGTILFLYCVPNPKTSSLIVTVASVFYTVAIPMLNPLIYSLRNKDINNMFEKLVVTKLIYH.

The Extracellular portion of the chain corresponds to 1–27 (MMASERNQSSTPTFILLGFSEYPEIQV). Asparagine 7 is a glycosylation site (N-linked (GlcNAc...) asparagine). A helical membrane pass occupies residues 28–48 (PLFLVFLFVYTVTVVGNLGMI). Topologically, residues 49-56 (IIIRLNSK) are cytoplasmic. Residues 57 to 77 (LHTIMCFFLSHLSLTDFCFST) form a helical membrane-spanning segment. Residues 78 to 101 (VVTPKLLENLVVEYRTISFSGCIM) are Extracellular-facing. Residues 102-122 (QFCFACIFGVTETFMLAAMAY) traverse the membrane as a helical segment. At 123 to 141 (DRFVAVCKPLLYTTIMSQK) the chain is on the cytoplasmic side. Residues 142-162 (LCALLVAGSYTWGIVCSLILT) traverse the membrane as a helical segment. Topologically, residues 163-198 (YFLLDLSFCESTFINNFICDHSVIVSASYSDPYISQ) are extracellular. The helical transmembrane segment at 199-219 (RLCFIIAIFNEVSSLIIILTS) threads the bilayer. Residues 220–239 (YMLIFTTIMKMRSASGRQKT) lie on the Cytoplasmic side of the membrane. The helical transmembrane segment at 240–260 (FSTCASHLTAITIFHGTILFL) threads the bilayer. The Extracellular portion of the chain corresponds to 261–273 (YCVPNPKTSSLIV). The chain crosses the membrane as a helical span at residues 274–294 (TVASVFYTVAIPMLNPLIYSL). Topologically, residues 295–314 (RNKDINNMFEKLVVTKLIYH) are cytoplasmic.

It belongs to the G-protein coupled receptor 1 family.

The protein resides in the cell membrane. In terms of biological role, odorant receptor. The polypeptide is Olfactory receptor 5D13 (OR5D13) (Homo sapiens (Human)).